The sequence spans 132 residues: Small ribosomal subunit protein uS8 (132 aa).

Belongs to the universal ribosomal protein uS8 family. Part of the 30S ribosomal subunit. Contacts proteins S5 and S12.

One of the primary rRNA binding proteins, it binds directly to 16S rRNA central domain where it helps coordinate assembly of the platform of the 30S subunit. This chain is Small ribosomal subunit protein uS8, found in Mycolicibacterium vanbaalenii (strain DSM 7251 / JCM 13017 / BCRC 16820 / KCTC 9966 / NRRL B-24157 / PYR-1) (Mycobacterium vanbaalenii).